The following is a 277-amino-acid chain: Phosphoenolpyruvate synthase regulatory protein (277 aa).

157–164 is an ADP binding site; it reads GVSRCGKT.

Belongs to the pyruvate, phosphate/water dikinase regulatory protein family. PSRP subfamily.

It catalyses the reaction [pyruvate, water dikinase] + ADP = [pyruvate, water dikinase]-phosphate + AMP + H(+). It carries out the reaction [pyruvate, water dikinase]-phosphate + phosphate + H(+) = [pyruvate, water dikinase] + diphosphate. Its function is as follows. Bifunctional serine/threonine kinase and phosphorylase involved in the regulation of the phosphoenolpyruvate synthase (PEPS) by catalyzing its phosphorylation/dephosphorylation. This Salmonella gallinarum (strain 287/91 / NCTC 13346) protein is Phosphoenolpyruvate synthase regulatory protein.